A 194-amino-acid polypeptide reads, in one-letter code: DNA replication complex GINS protein PSF3 (194 aa).

Belongs to the GINS3/PSF3 family. In terms of assembly, component of the GINS complex which is a heterotetramer of SLD5, PSF1, PSF2 and PSF3.

The protein localises to the nucleus. Its function is as follows. Functions as part of the GINS complex which plays an essential role in the initiation of DNA replication by binding to DNA replication origins and facilitating the assembly of the DNA replication machinery. The sequence is that of DNA replication complex GINS protein PSF3 from Saccharomyces cerevisiae (strain ATCC 204508 / S288c) (Baker's yeast).